Reading from the N-terminus, the 313-residue chain is Porphobilinogen deaminase (313 aa).

At cysteine 242 the chain carries S-(dipyrrolylmethanemethyl)cysteine.

It belongs to the HMBS family. As to quaternary structure, monomer. Requires dipyrromethane as cofactor.

It carries out the reaction 4 porphobilinogen + H2O = hydroxymethylbilane + 4 NH4(+). It participates in porphyrin-containing compound metabolism; protoporphyrin-IX biosynthesis; coproporphyrinogen-III from 5-aminolevulinate: step 2/4. Its function is as follows. Tetrapolymerization of the monopyrrole PBG into the hydroxymethylbilane pre-uroporphyrinogen in several discrete steps. The chain is Porphobilinogen deaminase from Pseudomonas putida (strain GB-1).